We begin with the raw amino-acid sequence, 348 residues long: Dihydroorotase (348 aa).

Zn(2+)-binding residues include His17 and His19. Substrate is bound by residues 19–21 (HLR) and Asn45. 3 residues coordinate Zn(2+): Lys103, His140, and His178. Lys103 is modified (N6-carboxylysine). Residue His140 coordinates substrate. Position 223 (Leu223) interacts with substrate. Zn(2+) is bound at residue Asp251. Asp251 is an active-site residue. The substrate site is built by His255 and Ala267.

Belongs to the metallo-dependent hydrolases superfamily. DHOase family. Class II DHOase subfamily. As to quaternary structure, homodimer. Zn(2+) serves as cofactor.

It carries out the reaction (S)-dihydroorotate + H2O = N-carbamoyl-L-aspartate + H(+). The protein operates within pyrimidine metabolism; UMP biosynthesis via de novo pathway; (S)-dihydroorotate from bicarbonate: step 3/3. Catalyzes the reversible cyclization of carbamoyl aspartate to dihydroorotate. The chain is Dihydroorotase from Shigella sonnei (strain Ss046).